A 145-amino-acid chain; its full sequence is Photosystem I reaction center subunit XI (145 aa).

The next 3 membrane-spanning stretches (helical) occupy residues 48–68 (LEIGMAHGYFLIGPFYILGPL), 75–95 (LLVGLFSAFGLILILTLGLTI), and 125–145 (IGAFGGASVAYVLLDNISFFA).

This sequence belongs to the PsaL family.

It localises to the plastid. The protein localises to the chloroplast thylakoid membrane. The chain is Photosystem I reaction center subunit XI from Emiliania huxleyi (Coccolithophore).